The following is a 305-amino-acid chain: UPF0282 protein Tneu_0934 (305 aa).

This sequence belongs to the UPF0282 family.

This is UPF0282 protein Tneu_0934 from Pyrobaculum neutrophilum (strain DSM 2338 / JCM 9278 / NBRC 100436 / V24Sta) (Thermoproteus neutrophilus).